Here is a 506-residue protein sequence, read N- to C-terminus: Zinc finger protein 157 (506 aa).

The KRAB domain occupies 27–98 (VSFEDVAVDF…EEESSGHGYS (72 aa)). 12 consecutive C2H2-type zinc fingers follow at residues 162–184 (FECHECGKAYCRKSNLVEHLRIH), 190–212 (YECGECAKTFSARSYLIAHQKTH), 218–240 (FECNECGKSFGRKSQLILHTRTH), 246–268 (YECTECGKTFSEKATLTIHQRTH), 274–296 (YECSECGKTFRVKISLTQHHRTH), 302–324 (YECGECGKNFRAKKSLNQHQRIH), 330–352 (YECGECGKFFRMKMTLNNHQRTH), 358–380 (YQCNECGKSFRVHSSLGIHQRIH), 386–408 (YECNECGNAFYVKARLIEHQRMH), 414–436 (YECSECGKIFSMKKSLCQHRRTH), 442–464 (YECSECGNAFYVKVRLIEHQRIH), and 470–492 (FECQECGKAFCRKAHLTEHQRTH).

Belongs to the krueppel C2H2-type zinc-finger protein family.

The protein resides in the nucleus. Functionally, may be involved in transcriptional regulation. The chain is Zinc finger protein 157 (ZNF157) from Homo sapiens (Human).